The chain runs to 315 residues: Bifunctional protein FolD (315 aa).

NADP(+) is bound by residues 166–168, S193, and I234; that span reads GRS.

This sequence belongs to the tetrahydrofolate dehydrogenase/cyclohydrolase family. Homodimer.

It catalyses the reaction (6R)-5,10-methylene-5,6,7,8-tetrahydrofolate + NADP(+) = (6R)-5,10-methenyltetrahydrofolate + NADPH. It carries out the reaction (6R)-5,10-methenyltetrahydrofolate + H2O = (6R)-10-formyltetrahydrofolate + H(+). Its pathway is one-carbon metabolism; tetrahydrofolate interconversion. Catalyzes the oxidation of 5,10-methylenetetrahydrofolate to 5,10-methenyltetrahydrofolate and then the hydrolysis of 5,10-methenyltetrahydrofolate to 10-formyltetrahydrofolate. The chain is Bifunctional protein FolD from Treponema pallidum (strain Nichols).